A 286-amino-acid chain; its full sequence is 3-methyl-2-oxobutanoate hydroxymethyltransferase (286 aa).

The Mg(2+) site is built by Asp-67 and Asp-106. Residues 67 to 68 (DS), Asp-106, and Lys-136 each bind 3-methyl-2-oxobutanoate. Glu-138 is a binding site for Mg(2+). Glu-204 (proton acceptor) is an active-site residue.

Belongs to the PanB family. Homodecamer; pentamer of dimers. The cofactor is Mg(2+).

It localises to the cytoplasm. The enzyme catalyses 3-methyl-2-oxobutanoate + (6R)-5,10-methylene-5,6,7,8-tetrahydrofolate + H2O = 2-dehydropantoate + (6S)-5,6,7,8-tetrahydrofolate. Its pathway is cofactor biosynthesis; (R)-pantothenate biosynthesis; (R)-pantoate from 3-methyl-2-oxobutanoate: step 1/2. In terms of biological role, catalyzes the reversible reaction in which hydroxymethyl group from 5,10-methylenetetrahydrofolate is transferred onto alpha-ketoisovalerate to form ketopantoate. This is 3-methyl-2-oxobutanoate hydroxymethyltransferase from Mycobacterium leprae (strain TN).